We begin with the raw amino-acid sequence, 320 residues long: Short-chain dehydrogenase/reductase ARMGADRAFT_1169971 (320 aa).

The chain crosses the membrane as a helical span at residues 19 to 39 (KVAVVTGANSGIGLYILFHVA). 4 residues coordinate NADP(+): isoleucine 30, aspartate 78, asparagine 105, and lysine 136. N-linked (GlcNAc...) asparagine glycosylation is present at asparagine 157. Serine 159 serves as the catalytic Proton donor. NADP(+) contacts are provided by tyrosine 192, lysine 196, valine 227, and serine 229. The active-site Proton acceptor is tyrosine 192. Lysine 196 functions as the Lowers pKa of active site Tyr in the catalytic mechanism. A helical transmembrane segment spans residues 235–255 (LFTSLMFGTIINWVFSLFFIS).

It belongs to the short-chain dehydrogenases/reductases (SDR) family.

Its subcellular location is the membrane. Its pathway is secondary metabolite biosynthesis. Short-chain dehydrogenase/reductase, part of the gene cluster that mediates the biosynthesis of melleolides, a range of antifungal and phytotoxic polyketide derivatives composed of an orsellinic acid (OA) moiety esterified to various sesquiterpene alcohols. The first step in melleolides biosynthesis is performed by the delta(6)-protoilludene synthase PRO1 which catalyzes the cyclization of farnesyl diphosphate to protoilludene. The orsellinic acid synthase armB produces OA by condensing acetyl-CoA with 3 malonyl-CoA units in a three-round chain elongation reaction folowed by a C2-C7 ring closure. ArmB further catalyzes the trans-esterification of OA to the various sesquiterpene alcohols resulting from the hydroxylation of protoilludene. The melleolides cluster also includes 5 cytochrome P450 monooxygenases, 4 NAD(+)-dependent oxidoreductases, one flavin-dependent oxidoreductase, and one O-methyltransferase. The cytochrome P450 monooxygenases may be involved in protoilludene hydroxylation to elaborate melleolides with multiple alcohol groups, such as melleolide D, which carries alcohol functionalities at C-4, C-5, C-10, and C-13. The role of the NAD(+)-dependent enzymes remains unknown. Numerous melleolides, including arnamial, show 5'-O-methylation of the aromatic moiety which may be catalyzed by the methyltransferase encoded in the cluster. The flavin-dependent oxidoreductase might represent the dehydrogenase yielding the aldehyde in position 1 of arnamial and other melleolides. Finally, several halogenase localized outside of the cluster, are able to catalyze the transfer of a single chlorine atom to the melleolide backbone, resulting in a 6'-chloromelleolide product. The sequence is that of Short-chain dehydrogenase/reductase ARMGADRAFT_1169971 from Armillaria gallica (Bulbous honey fungus).